Here is an 838-residue protein sequence, read N- to C-terminus: Multiphosphoryl transfer protein (838 aa).

Residues Ala7 to Asp147 enclose the PTS EIIA type-2 domain. His67 serves as the catalytic Tele-phosphohistidine intermediate; for EIIA activity. A Phosphohistidine; by HPr modification is found at His67. The region spanning Ala161–Glu253 is the HPr domain. His175 (pros-phosphohistidine intermediate; for HPr activity) is an active-site residue. Phosphohistidine; by EI is present on His175. Residues Ala274–Ala838 form a PTS EI region. The Tele-phosphohistidine intermediate; for PTS EI activity role is filled by His460. A Phosphohistidine; by autocatalysis modification is found at His460. Phosphoenolpyruvate is bound by residues Arg567 and Arg603. Glu697 and Asp721 together coordinate Mg(2+). Residues Asn720 to Asp721 and Arg731 contribute to the phosphoenolpyruvate site. The active-site Proton donor is the Cys768.

It belongs to the PEP-utilizing enzyme family. Mg(2+) is required as a cofactor.

Its subcellular location is the cytoplasm. It carries out the reaction L-histidyl-[protein] + phosphoenolpyruvate = N(pros)-phospho-L-histidyl-[protein] + pyruvate. The phosphoenolpyruvate-dependent sugar phosphotransferase system (sugar PTS), a major carbohydrate active transport system, catalyzes the phosphorylation of incoming sugar substrates concomitantly with their translocation across the cell membrane. The enzyme II FruAB PTS system is involved in fructose transport. This chain is Multiphosphoryl transfer protein, found in Xanthomonas campestris pv. campestris (strain ATCC 33913 / DSM 3586 / NCPPB 528 / LMG 568 / P 25).